Reading from the N-terminus, the 726-residue chain is Serine/threonine-protein kinase PKH3 (726 aa).

The region spanning 10–271 (FLFREELGHG…LEQIKKHKWF (262 aa)) is the Protein kinase domain. ATP contacts are provided by residues 16-24 (LGHGSYSTV) and Lys39. Residue Asp136 is the Proton acceptor of the active site. Residues 629–679 (QDIPLPSPAKSSSNSGVSEPISKIPPRQLVSASEQSHKAKSEAHTKKANSY) form a disordered region. Residues 663–673 (QSHKAKSEAHT) show a composition bias toward basic and acidic residues.

The protein belongs to the protein kinase superfamily. Ser/Thr protein kinase family.

The enzyme catalyses L-seryl-[protein] + ATP = O-phospho-L-seryl-[protein] + ADP + H(+). It carries out the reaction L-threonyl-[protein] + ATP = O-phospho-L-threonyl-[protein] + ADP + H(+). In terms of biological role, serine/threonine-protein kinase. The chain is Serine/threonine-protein kinase PKH3 (PKH3) from Eremothecium gossypii (strain ATCC 10895 / CBS 109.51 / FGSC 9923 / NRRL Y-1056) (Yeast).